Reading from the N-terminus, the 393-residue chain is Dual-specificity RNA methyltransferase RlmN (393 aa).

Glu114 (proton acceptor) is an active-site residue. The 240-residue stretch at 120–359 (EDDRATLCVS…VIVRKTRGDD (240 aa)) folds into the Radical SAM core domain. Cys127 and Cys364 form a disulfide bridge. [4Fe-4S] cluster is bound by residues Cys134, Cys138, and Cys141. S-adenosyl-L-methionine-binding positions include 188 to 189 (GE), Ser220, 242 to 244 (SLH), and Asn321. Cys364 functions as the S-methylcysteine intermediate in the catalytic mechanism.

The protein belongs to the radical SAM superfamily. RlmN family. [4Fe-4S] cluster serves as cofactor.

The protein localises to the cytoplasm. The catalysed reaction is adenosine(2503) in 23S rRNA + 2 reduced [2Fe-2S]-[ferredoxin] + 2 S-adenosyl-L-methionine = 2-methyladenosine(2503) in 23S rRNA + 5'-deoxyadenosine + L-methionine + 2 oxidized [2Fe-2S]-[ferredoxin] + S-adenosyl-L-homocysteine. It catalyses the reaction adenosine(37) in tRNA + 2 reduced [2Fe-2S]-[ferredoxin] + 2 S-adenosyl-L-methionine = 2-methyladenosine(37) in tRNA + 5'-deoxyadenosine + L-methionine + 2 oxidized [2Fe-2S]-[ferredoxin] + S-adenosyl-L-homocysteine. Specifically methylates position 2 of adenine 2503 in 23S rRNA and position 2 of adenine 37 in tRNAs. m2A2503 modification seems to play a crucial role in the proofreading step occurring at the peptidyl transferase center and thus would serve to optimize ribosomal fidelity. The polypeptide is Dual-specificity RNA methyltransferase RlmN (Actinobacillus pleuropneumoniae serotype 3 (strain JL03)).